We begin with the raw amino-acid sequence, 430 residues long: Adenylosuccinate synthetase (430 aa).

GTP-binding positions include 12–18 and 40–42; these read GDEGKGK and GHT. D13 serves as the catalytic Proton acceptor. Residues D13 and G40 each contribute to the Mg(2+) site. IMP is bound by residues 13-16, 38-41, T130, R144, Q224, T239, and R303; these read DEGK and NAGH. The active-site Proton donor is the H41. 299–305 provides a ligand contact to substrate; it reads VNTGRKR. GTP is bound by residues R305, 331-333, and 413-415; these read KLD and STS.

Belongs to the adenylosuccinate synthetase family. Homodimer. It depends on Mg(2+) as a cofactor.

It localises to the cytoplasm. It carries out the reaction IMP + L-aspartate + GTP = N(6)-(1,2-dicarboxyethyl)-AMP + GDP + phosphate + 2 H(+). It participates in purine metabolism; AMP biosynthesis via de novo pathway; AMP from IMP: step 1/2. Its function is as follows. Plays an important role in the de novo pathway of purine nucleotide biosynthesis. Catalyzes the first committed step in the biosynthesis of AMP from IMP. The polypeptide is Adenylosuccinate synthetase (Rhodopseudomonas palustris (strain ATCC BAA-98 / CGA009)).